A 376-amino-acid chain; its full sequence is N-acetyldiaminopimelate deacetylase (376 aa).

Asp69 is an active-site residue. Glu128 acts as the Proton acceptor in catalysis.

It belongs to the peptidase M20A family. N-acetyldiaminopimelate deacetylase subfamily.

It carries out the reaction N-acetyl-(2S,6S)-2,6-diaminopimelate + H2O = (2S,6S)-2,6-diaminopimelate + acetate. It functions in the pathway amino-acid biosynthesis; L-lysine biosynthesis via DAP pathway; LL-2,6-diaminopimelate from (S)-tetrahydrodipicolinate (acetylase route): step 3/3. In terms of biological role, catalyzes the conversion of N-acetyl-diaminopimelate to diaminopimelate and acetate. The sequence is that of N-acetyldiaminopimelate deacetylase from Streptococcus pneumoniae (strain Hungary19A-6).